Consider the following 326-residue polypeptide: tRNA uridine(34) hydroxylase (326 aa).

One can recognise a Rhodanese domain in the interval 123 to 217 (SDPDVLLVDT…YLEEVPEENS (95 aa)). Cysteine 177 functions as the Cysteine persulfide intermediate in the catalytic mechanism. Residues 276-320 (EEQKSRFREREKQVQLANERGETHVGGDAAKLIEQRKQEKKEKKQ) are compositionally biased toward basic and acidic residues. Residues 276 to 326 (EEQKSRFREREKQVQLANERGETHVGGDAAKLIEQRKQEKKEKKQQQRSSK) form a disordered region.

The protein belongs to the TrhO family.

It catalyses the reaction uridine(34) in tRNA + AH2 + O2 = 5-hydroxyuridine(34) in tRNA + A + H2O. Functionally, catalyzes oxygen-dependent 5-hydroxyuridine (ho5U) modification at position 34 in tRNAs. The sequence is that of tRNA uridine(34) hydroxylase from Aliivibrio salmonicida (strain LFI1238) (Vibrio salmonicida (strain LFI1238)).